Reading from the N-terminus, the 250-residue chain is Ribosomal RNA small subunit methyltransferase J (250 aa).

S-adenosyl-L-methionine contacts are provided by residues 101-102, 117-118, 153-154, and aspartate 171; these read RD, ER, and SS.

Belongs to the methyltransferase superfamily. RsmJ family.

It localises to the cytoplasm. It catalyses the reaction guanosine(1516) in 16S rRNA + S-adenosyl-L-methionine = N(2)-methylguanosine(1516) in 16S rRNA + S-adenosyl-L-homocysteine + H(+). Functionally, specifically methylates the guanosine in position 1516 of 16S rRNA. The sequence is that of Ribosomal RNA small subunit methyltransferase J from Shigella flexneri serotype 5b (strain 8401).